Consider the following 334-residue polypeptide: Dolichyl-phosphate beta-glucosyltransferase (334 aa).

Residues 1 to 12 (MRALRFLIENRN) are Lumenal-facing. Residues 13–33 (TVFFTLLVALVLSLYLLVYLF) traverse the membrane as a helical segment. Over 34–334 (SHTPRPPYPE…LGIYRDNKKC (301 aa)) the chain is Cytoplasmic.

The protein belongs to the glycosyltransferase 2 family.

The protein resides in the endoplasmic reticulum membrane. It carries out the reaction a di-trans,poly-cis-dolichyl phosphate + UDP-alpha-D-glucose = a di-trans,poly-cis-dolichyl beta-D-glucosyl phosphate + UDP. Its pathway is protein modification; protein glycosylation. In terms of biological role, endoplasmic reticulum membrane-bound UDP-glucose:dolichyl-phosphate glucosyltransferase involved in protein N-linked glycosylation. The protein is Dolichyl-phosphate beta-glucosyltransferase of Saccharomyces cerevisiae (strain ATCC 204508 / S288c) (Baker's yeast).